The primary structure comprises 159 residues: Ribosomal RNA large subunit methyltransferase H (159 aa).

2 residues coordinate S-adenosyl-L-methionine: L76 and G108.

This sequence belongs to the RNA methyltransferase RlmH family. Homodimer.

It localises to the cytoplasm. The catalysed reaction is pseudouridine(1915) in 23S rRNA + S-adenosyl-L-methionine = N(3)-methylpseudouridine(1915) in 23S rRNA + S-adenosyl-L-homocysteine + H(+). Functionally, specifically methylates the pseudouridine at position 1915 (m3Psi1915) in 23S rRNA. The chain is Ribosomal RNA large subunit methyltransferase H from Finegoldia magna (strain ATCC 29328 / DSM 20472 / WAL 2508) (Peptostreptococcus magnus).